Reading from the N-terminus, the 732-residue chain is Asp/Glu-specific dipeptidyl-peptidase (732 aa).

The first 18 residues, 1–18 (MRIALVATLVLTSGIANA), serve as a signal peptide directing secretion. Active-site charge relay system residues include His-80, Asp-215, and Ser-666.

This sequence belongs to the peptidase S46 family.

Catalyzes the removal of dipeptides from the N-terminus of oligopeptides. Shows a strict specificity for acidic residues (Asp or Glu) in the P1 position, and has probably a hydrophobic residue preference at the P2 position. Preferentially cleaves the synthetic substrate Leu-Glu-methylcoumaryl-7-amide (Leu-Glu-MCA) as compared to Leu-Asp-MCA. The sequence is that of Asp/Glu-specific dipeptidyl-peptidase (dpp11) from Shewanella putrefaciens (strain CN-32 / ATCC BAA-453).